The chain runs to 466 residues: ATP synthase subunit beta (466 aa).

153-160 (GGAGVGKT) is a binding site for ATP.

It belongs to the ATPase alpha/beta chains family. In terms of assembly, F-type ATPases have 2 components, CF(1) - the catalytic core - and CF(0) - the membrane proton channel. CF(1) has five subunits: alpha(3), beta(3), gamma(1), delta(1), epsilon(1). CF(0) has three main subunits: a(1), b(2) and c(9-12). The alpha and beta chains form an alternating ring which encloses part of the gamma chain. CF(1) is attached to CF(0) by a central stalk formed by the gamma and epsilon chains, while a peripheral stalk is formed by the delta and b chains.

The protein localises to the cell membrane. It carries out the reaction ATP + H2O + 4 H(+)(in) = ADP + phosphate + 5 H(+)(out). In terms of biological role, produces ATP from ADP in the presence of a proton gradient across the membrane. The catalytic sites are hosted primarily by the beta subunits. The polypeptide is ATP synthase subunit beta (Leuconostoc citreum (strain KM20)).